The primary structure comprises 958 residues: Transcription factor PfmaH (958 aa).

Positions 44–70 (CLNCSQAKTGCNKEVPCQRCQDKGLHC) form a DNA-binding region, zn(2)-C6 fungal-type. Positions 272–301 (EFAGSPSGVSPFGDLSTSNSEPSSSSWGSS) are disordered. Over residues 287–301 (STSNSEPSSSSWGSS) the composition is skewed to low complexity.

The protein resides in the nucleus. In terms of biological role, transcription factor; part of the gene cluster that mediates the biosynthesis of dihydroxynaphthalene (DHN)-melanin, a bluish-green pigment forming a dark layer in the conidial wall that protects the conidia from UV radiations. The 2 transcription factors present in the cluster, PfmaF and PfmaH, coordinately regulate DHN-melanin production. PfmaH acts as a pathway specific regulator to mediate the expression of Pfma cluster genes including PfmaJ, leading to DHN-melanin production in conidia, and regulates the conidial formation. In Pestalotiopsis fici (strain W106-1 / CGMCC3.15140), this protein is Transcription factor PfmaH (PfmaH).